The chain runs to 456 residues: UDP-N-acetylmuramate--L-alanine ligase (456 aa).

Gly-112–Thr-118 lines the ATP pocket.

This sequence belongs to the MurCDEF family.

It is found in the cytoplasm. The catalysed reaction is UDP-N-acetyl-alpha-D-muramate + L-alanine + ATP = UDP-N-acetyl-alpha-D-muramoyl-L-alanine + ADP + phosphate + H(+). It functions in the pathway cell wall biogenesis; peptidoglycan biosynthesis. In terms of biological role, cell wall formation. This Desulfatibacillum aliphaticivorans protein is UDP-N-acetylmuramate--L-alanine ligase.